Here is an 80-residue protein sequence, read N- to C-terminus: Pigment-dispersing hormone type 2 (80 aa).

An N-terminal signal peptide occupies residues 1 to 23 (MARCFVVLAFLALAAMSLQVATA). At alanine 77 the chain carries Alanine amide.

This sequence belongs to the arthropod PDH family. As to expression, eyestalk.

The protein localises to the secreted. In terms of biological role, the pigment-dispersing hormone causes the migration of the distal retinal pigment into the proximal end of the pigment chromatophore cells and thus decreases the amount of light entering the retinulas. May also function as a neurotransmitter and/or neuromodulator. The polypeptide is Pigment-dispersing hormone type 2 (PDH2) (Penaeus vannamei (Whiteleg shrimp)).